A 202-amino-acid polypeptide reads, in one-letter code: MKGNLFIITAPSGAGKTSLVRALLDGDEHIKLSVSHTTRKPRPGEEDGVHYHFVEEARFVELLNHGDFLESAQVHGAYYGTSQSTVNSALAEGYDLILEIDWQGAQQVRSLYADAISIFILPPSMEALEQRLNNRAQDSAEVIARRLAAAREEMRHVTEFDYVTINDRFEHALEDLRAIIRSQRLRREKQLIRYQDVVQKLL.

Positions 3–181 (GNLFIITAPS…ALEDLRAIIR (179 aa)) constitute a Guanylate kinase-like domain. Residue 10–17 (APSGAGKT) coordinates ATP.

The protein belongs to the guanylate kinase family.

The protein localises to the cytoplasm. The enzyme catalyses GMP + ATP = GDP + ADP. In terms of biological role, essential for recycling GMP and indirectly, cGMP. This Methylobacillus flagellatus (strain ATCC 51484 / DSM 6875 / VKM B-1610 / KT) protein is Guanylate kinase.